The chain runs to 333 residues: MKKRTIATGLVTLLSIVTLAACSKTNQNSKIATMKGDTITVADFYNEVKNSTASKQAVLSLLVSKVFEKQYGDKVSDKEVTKAYNEAAKYYGDSFSSALASRGYTKEDYKKQIRSEKLIEYAVKEEAKKEITDASYKSAYKDYKPEVTAQVIQLDSEDKAKSVLEEAKADGADFAKIAKDNTKGDKTEYSFDSGSTNLPSQVLSAALNLDKDGVSDVIKASDSTTYKPVYYIVKITKKTDKNADWKAYKKRLKEIIVSQKLNDSNFRNAVIGKAFKKANVKIKDKAFSEILSQYAAASGSGSSGSTTTTTAASSAATTAADDQTTAAETTAAE.

Positions 1–21 are cleaved as a signal peptide; it reads MKKRTIATGLVTLLSIVTLAA. The N-palmitoyl cysteine moiety is linked to residue cysteine 22. Residue cysteine 22 is the site of S-diacylglycerol cysteine attachment. Positions 144-237 constitute a PpiC domain; the sequence is KPEVTAQVIQ…PVYYIVKITK (94 aa). The interval 296-333 is disordered; sequence AASGSGSSGSTTTTTAASSAATTAADDQTTAAETTAAE.

It belongs to the PrsA family.

The protein localises to the cell membrane. It carries out the reaction [protein]-peptidylproline (omega=180) = [protein]-peptidylproline (omega=0). Functionally, plays a major role in protein secretion by helping the post-translocational extracellular folding of several secreted proteins. The chain is Foldase protein PrsA from Streptococcus mutans serotype c (strain ATCC 700610 / UA159).